The primary structure comprises 236 residues: Phosphoribosylaminoimidazole-succinocarboxamide synthase (236 aa).

This sequence belongs to the SAICAR synthetase family.

It carries out the reaction 5-amino-1-(5-phospho-D-ribosyl)imidazole-4-carboxylate + L-aspartate + ATP = (2S)-2-[5-amino-1-(5-phospho-beta-D-ribosyl)imidazole-4-carboxamido]succinate + ADP + phosphate + 2 H(+). The protein operates within purine metabolism; IMP biosynthesis via de novo pathway; 5-amino-1-(5-phospho-D-ribosyl)imidazole-4-carboxamide from 5-amino-1-(5-phospho-D-ribosyl)imidazole-4-carboxylate: step 1/2. This Campylobacter concisus (strain 13826) protein is Phosphoribosylaminoimidazole-succinocarboxamide synthase.